The primary structure comprises 404 residues: Sorting nexin-5 (404 aa).

A2 carries the post-translational modification N-acetylalanine. The PX domain maps to 25-172 (LNVDPSLQID…HVFLEYDQDL (148 aa)). Residues 40 to 46 (SERDKVK), 99 to 105 (FDGPREK), and 113 to 116 (EGSM) each bind a 1,2-diacyl-sn-glycero-3-phospho-(1D-myo-inositol-4,5-bisphosphate). An interaction with DOCK1 region spans residues 169–261 (DQDLSVRRKN…HSLALEEPTV (93 aa)). Residues 183-200 (FGGFFKSVVKSADEVLFS) form a membrane-binding amphipathic helix region. Position 193 is a phosphoserine (S193). Positions 202 to 404 (VKEVDDFFEQ…QSCIDLFKNN (203 aa)) constitute a BAR domain. K275 carries the N6-acetyllysine modification.

The protein belongs to the sorting nexin family. As to quaternary structure, forms heterodimers with BAR domain-containing sorting nexins SNX1 and SNX2; does not homodimerize. The heterodimers are proposed to self-assemble into helical arrays on the membrane to stabilize and expand local membrane curvature underlying endosomal tubule formation. Thought to be a component of the originally described retromer complex (also called SNX-BAR retromer) which is a pentamer containing the heterotrimeric retromer cargo-selective complex (CSC), also described as vacuolar protein sorting subcomplex (VPS), and a heterodimeric membrane-deforming subcomplex formed between SNX1 or SNX2 and SNX5 or SNX6 (also called SNX-BAR subcomplex); the respective CSC and SNX-BAR subcomplexes associate with low affinity. Interacts with SNX1, SNX2, VPS26A, VPS29, VPS35, DCTN1, DOCK1, MIB1, PIP5K1C. Interacts with HGS; increased by PIP5K1C kinase activity and by PtdIns(3P) and/or PtdIns(3,4)P2. As to expression, detected in macrophages (at protein level).

The protein resides in the endosome. It localises to the early endosome. Its subcellular location is the early endosome membrane. The protein localises to the cell membrane. It is found in the cytoplasmic vesicle membrane. The protein resides in the cytoplasm. It localises to the cell projection. Its subcellular location is the phagocytic cup. The protein localises to the ruffle. Functionally, involved in several stages of intracellular trafficking. Interacts with membranes containing phosphatidylinositol lipids. Acts in part as component of the retromer membrane-deforming SNX-BAR subcomplex. The SNX-BAR retromer mediates retrograde transport of cargo proteins from endosomes to the trans-Golgi network (TGN) and is involved in endosome-to-plasma membrane transport for cargo protein recycling. The SNX-BAR subcomplex functions to deform the donor membrane into a tubular profile called endosome-to-TGN transport carrier (ETC). Does not have in vitro vesicle-to-membrane remodeling activity. Involved in retrograde transport of lysosomal enzyme receptor IGF2R. May function as link between endosomal transport vesicles and dynactin. Plays a role in the internalization of EGFR after EGF stimulation. Involved in EGFR endosomal sorting and degradation; the function involves PIP5K1C and is retromer-independent. Together with PIP5K1C facilitates HGS interaction with ubiquitinated EGFR, which initiates EGFR sorting to intraluminal vesicles (ILVs) of the multivesicular body for subsequent lysosomal degradation. Involved in E-cadherin sorting and degradation; inhibits PIP5K1C-mediated E-cadherin degradation. Plays a role in macropinocytosis. The polypeptide is Sorting nexin-5 (Snx5) (Mus musculus (Mouse)).